The primary structure comprises 300 residues: Chaperone protein dnaJ 50 (300 aa).

The first 27 residues, 1–27 (MAPPVTERWCLALILLFLSLFVQSSTA), serve as a signal peptide directing secretion. Residues 28–122 (IYCGAEDCYA…RAKYGHKSDP (95 aa)) lie on the Lumenal side of the membrane. The J domain occupies 34 to 98 (DCYALLGVAQ…TTRAQYDYAI (65 aa)). N-linked (GlcNAc...) asparagine glycans are attached at residues Asn-46 and Asn-88. Residues 123–143 (RAVLVGLLVVLSAFQYLNNVA) traverse the membrane as a helical segment. Over 144 to 206 (RYNEAIATVK…LQIKGAEKPS (63 aa)) the chain is Cytoplasmic. Residues 207–227 (VWELLGVRFILLPYTIIKLLV) form a helical membrane-spanning segment. The Lumenal segment spans residues 228–300 (WYSSWVWRYK…EMRKESKRRR (73 aa)).

Expressed in leaves, flower buds and flowers.

The protein resides in the endoplasmic reticulum membrane. In terms of biological role, may play a role in protein folding in the endoplasmic reticulum. The chain is Chaperone protein dnaJ 50 (C50) from Arabidopsis thaliana (Mouse-ear cress).